The primary structure comprises 191 residues: Ion-translocating oxidoreductase complex subunit B (191 aa).

A hydrophobic region spans residues methionine 1 to serine 26. The 4Fe-4S domain occupies glutamate 32–valine 91. Residues cysteine 49, cysteine 52, cysteine 57, cysteine 74, cysteine 116, cysteine 119, cysteine 122, cysteine 126, cysteine 146, cysteine 149, cysteine 152, and cysteine 156 each contribute to the [4Fe-4S] cluster site. 4Fe-4S ferredoxin-type domains follow at residues lysine 107–arginine 136 and alanine 137–valine 166.

This sequence belongs to the 4Fe4S bacterial-type ferredoxin family. RnfB subfamily. As to quaternary structure, the complex is composed of six subunits: RnfA, RnfB, RnfC, RnfD, RnfE and RnfG. The cofactor is [4Fe-4S] cluster.

It localises to the cell inner membrane. Its function is as follows. Part of a membrane-bound complex that couples electron transfer with translocation of ions across the membrane. The protein is Ion-translocating oxidoreductase complex subunit B of Erwinia tasmaniensis (strain DSM 17950 / CFBP 7177 / CIP 109463 / NCPPB 4357 / Et1/99).